The chain runs to 240 residues: 2,3-bisphosphoglycerate-dependent phosphoglycerate mutase 2 (240 aa).

Residues 8–15 (RHGQSEWN), 21–22 (TG), Arg-60, 87–90 (ERHY), Lys-98, 114–115 (RR), and 183–184 (GN) contribute to the substrate site. Residue His-9 is the Tele-phosphohistidine intermediate of the active site. The active-site Proton donor/acceptor is the Glu-87.

The protein belongs to the phosphoglycerate mutase family. BPG-dependent PGAM subfamily.

It carries out the reaction (2R)-2-phosphoglycerate = (2R)-3-phosphoglycerate. It participates in carbohydrate degradation; glycolysis; pyruvate from D-glyceraldehyde 3-phosphate: step 3/5. Catalyzes the interconversion of 2-phosphoglycerate and 3-phosphoglycerate. This chain is 2,3-bisphosphoglycerate-dependent phosphoglycerate mutase 2, found in Bacillus cereus (strain ATCC 10987 / NRS 248).